Here is a 474-residue protein sequence, read N- to C-terminus: MKTKCICELCSCGRHHCPHLPTKIYDKTEKPCLLSEYTENYPCYHSYLPRESFKPRREYQKGSIPMEGLTTSRRDFGPHKVAPVKAHQYDQFVPSEENMDLLTTYKKDYNPYTVCRVDPIKPRDSKYPYSNKMEYLPTYKADYLPWNQPRRQPLRLEHKYQPASVRFDNRTTHQDDYPIKGLVKTVSCKPLAMPKLCNIPLEDVTNYKMSYVAHPVEKRFVHEAEKFRPCEIPFESLTTHKQSYRGLMGEPAKSLKPLARPPGLDMPFSNTTEFRDKYQAWPTPQMFSKAPITYVPPEDSMDLLTTVQAHYTYPKGVPARSCRPAPQIRKSGRFEGSSTTKDDYKQWSSMRTEPVKPIPQLDFPTEPLDCLTTTRAHYVPHPPINTKSCKPHWSGPRGNVPVEGQTTYTISFTPKEMSKCLASYPEPPGYTFEEVDALGHRIYKPVSQAGSQQSSHLSVDDSENPSQRKLEVSA.

Mn stretches follow at residues 30-64 (KPCL…KGSI), 65-97 (PMEG…PSEE), 98-131 (NMDL…PYSN), 132-165 (KMEY…PASV), 166-199 (RFDN…LCNI), 200-232 (PLED…PCEI), 233-266 (PFES…GLDM), 267-299 (PFSN…PPED), 300-332 (SMDL…RKSG), 333-366 (RFEG…FPTE), 367-400 (PLDC…RGNV), and 401-434 (PVEG…TFEE). The tract at residues 318–350 (PARSCRPAPQIRKSGRFEGSSTTKDDYKQWSSM) is disordered. Positions 444–474 (KPVSQAGSQQSSHLSVDDSENPSQRKLEVSA) are disordered. Residues 448–457 (QAGSQQSSHL) are compositionally biased toward polar residues.

This sequence belongs to the FAM154 family. Associates with microtubules via the Mn regions.

The protein localises to the cytoplasm. The protein resides in the cytoskeleton. It is found in the microtubule organizing center. It localises to the centrosome. Its subcellular location is the centriole. The protein localises to the cilium basal body. The protein resides in the cilium axoneme. It is found in the flagellum axoneme. Its function is as follows. May play a role in the regulation of cilium length. Stabilizes microtubules at low temperature. This Macaca fascicularis (Crab-eating macaque) protein is Stabilizer of axonemal microtubules 1 (SAXO1).